Here is a 71-residue protein sequence, read N- to C-terminus: MSPIIINSVRLISSLLTIVFIMLPKVDTFSKIMKNKKILLNWQENISTLSIIKWISIILFLSSHCALFITL.

The protein resides in the plastid. Its subcellular location is the chloroplast. This is an uncharacterized protein from Mesostigma viride (Green alga).